An 88-amino-acid chain; its full sequence is Small ribosomal subunit protein bS21 (88 aa).

The tract at residues 58-88 (ARKRAQREGLLPMTPRPVAAGGAAGAARPPR) is disordered. A compositionally biased stretch (low complexity) spans 73-88 (RPVAAGGAAGAARPPR).

Belongs to the bacterial ribosomal protein bS21 family.

This Mesorhizobium japonicum (strain LMG 29417 / CECT 9101 / MAFF 303099) (Mesorhizobium loti (strain MAFF 303099)) protein is Small ribosomal subunit protein bS21.